Reading from the N-terminus, the 314-residue chain is tRNA dimethylallyltransferase (314 aa).

11–18 (GPTGSGKT) provides a ligand contact to ATP. 13–18 (TGSGKT) provides a ligand contact to substrate. Residues 36–39 (DSMQ) form an interaction with substrate tRNA region.

The protein belongs to the IPP transferase family. Monomer. The cofactor is Mg(2+).

The enzyme catalyses adenosine(37) in tRNA + dimethylallyl diphosphate = N(6)-dimethylallyladenosine(37) in tRNA + diphosphate. Catalyzes the transfer of a dimethylallyl group onto the adenine at position 37 in tRNAs that read codons beginning with uridine, leading to the formation of N6-(dimethylallyl)adenosine (i(6)A). The sequence is that of tRNA dimethylallyltransferase from Chlamydia trachomatis serovar D (strain ATCC VR-885 / DSM 19411 / UW-3/Cx).